The following is a 494-amino-acid chain: Probable cytosol aminopeptidase (494 aa).

Positions 260 and 265 each coordinate Mn(2+). The active site involves K272. Mn(2+)-binding residues include D283, D342, and E344. Residue R346 is part of the active site.

It belongs to the peptidase M17 family. Mn(2+) serves as cofactor.

Its subcellular location is the cytoplasm. It catalyses the reaction Release of an N-terminal amino acid, Xaa-|-Yaa-, in which Xaa is preferably Leu, but may be other amino acids including Pro although not Arg or Lys, and Yaa may be Pro. Amino acid amides and methyl esters are also readily hydrolyzed, but rates on arylamides are exceedingly low.. The enzyme catalyses Release of an N-terminal amino acid, preferentially leucine, but not glutamic or aspartic acids.. Presumably involved in the processing and regular turnover of intracellular proteins. Catalyzes the removal of unsubstituted N-terminal amino acids from various peptides. The chain is Probable cytosol aminopeptidase from Bacillus cereus (strain B4264).